Here is a 361-residue protein sequence, read N- to C-terminus: Versatile peroxidase VPL2 (361 aa).

The first 22 residues, 1-22, serve as a signal peptide directing secretion; the sequence is MSFKTLSALALALGAAVQFASA. Positions 23–30 are excised as a propeptide; it reads AVPLVQKR. 4 disulfides stabilise this stretch: Cys-33–Cys-45, Cys-44–Cys-308, Cys-64–Cys-144, and Cys-272–Cys-337. The Mn(2+) site is built by Glu-66 and Glu-70. Residue His-77 is the Proton acceptor of the active site. Ca(2+) contacts are provided by Asp-78, Gly-90, Asp-92, and Ser-94. Asn-126 carries an N-linked (GlcNAc...) asparagine glycan. Trp-194 functions as the Tryptophan radical intermediate in the catalytic mechanism. Residue His-199 coordinates heme b. Ser-200 is a Ca(2+) binding site. Residue 203 to 207 participates in heme b binding; the sequence is AADKV. Asp-205 contributes to the Mn(2+) binding site. Residues Asp-217, Thr-219, Val-222, and Asp-224 each coordinate Ca(2+).

The protein belongs to the peroxidase family. Ligninase subfamily. It depends on heme b as a cofactor. Ca(2+) is required as a cofactor.

The protein resides in the secreted. It catalyses the reaction 1-(4-hydroxy-3-methoxyphenyl)-2-(2-methoxyphenoxy)propane-1,3-diol + H2O2 = guaiacol + vanillin + glycolaldehyde + H2O. The enzyme catalyses 2 Mn(2+) + H2O2 + 2 H(+) = 2 Mn(3+) + 2 H2O. A versatile ligninolytic peroxidase that combines the substrate specificity characteristics of the two other ligninolytic peroxidases, manganese peroxidase and lignin peroxidase. The chain is Versatile peroxidase VPL2 (vpl2) from Pleurotus eryngii (Boletus of the steppes).